Here is a 511-residue protein sequence, read N- to C-terminus: L-aspartate oxidase (511 aa).

FAD is bound by residues 16–19 (AGLA) and 48–55 (SSAWAQGG). The active-site Proton donor/acceptor is the R282. FAD-binding positions include E365 and 381 to 382 (SL).

Belongs to the FAD-dependent oxidoreductase 2 family. NadB subfamily. The cofactor is FAD.

It is found in the cytoplasm. The catalysed reaction is L-aspartate + O2 = iminosuccinate + H2O2. It functions in the pathway cofactor biosynthesis; NAD(+) biosynthesis; iminoaspartate from L-aspartate (oxidase route): step 1/1. In terms of biological role, catalyzes the oxidation of L-aspartate to iminoaspartate, the first step in the de novo biosynthesis of NAD(+). The chain is L-aspartate oxidase (nadB) from Caulobacter vibrioides (strain ATCC 19089 / CIP 103742 / CB 15) (Caulobacter crescentus).